Here is a 332-residue protein sequence, read N- to C-terminus: Probable ABC transporter permease protein YphD (332 aa).

A run of 10 helical transmembrane segments spans residues 28–48 (GLLV…PGFI), 63–83 (IGIA…DVSV), 84–104 (GPMV…EVPL), 105–125 (AVAC…AGVL), 131–151 (VPSF…GLFM), 172–192 (FLGV…FVFI), 222–242 (VRIL…ILLA), 251–271 (GAAN…GTAL), 278–298 (LFGT…LVLL), and 303–323 (FFQQ…NILL).

This sequence belongs to the binding-protein-dependent transport system permease family. AraH/RbsC subfamily.

It is found in the cell inner membrane. In terms of biological role, probably part of the binding-protein-dependent transport system YphDEF. Probably responsible for the translocation of the substrate across the membrane. The protein is Probable ABC transporter permease protein YphD (yphD) of Escherichia coli (strain K12).